The chain runs to 623 residues: Chaperone protein DnaK (623 aa).

Thr-175 is modified (phosphothreonine; by autocatalysis). Residues 580–623 (PEGAQGAGFDPNNMGGANAGNASAGNDKKDDNVVDADFKVEDDK) form a disordered region. The span at 591-604 (NNMGGANAGNASAG) shows a compositional bias: low complexity. Positions 605–623 (NDKKDDNVVDADFKVEDDK) are enriched in basic and acidic residues.

The protein belongs to the heat shock protein 70 family.

Its function is as follows. Acts as a chaperone. In Clostridium botulinum (strain Hall / ATCC 3502 / NCTC 13319 / Type A), this protein is Chaperone protein DnaK.